The chain runs to 377 residues: Queuine tRNA-ribosyltransferase (377 aa).

Catalysis depends on Asp92, which acts as the Proton acceptor. Residues 92-96, Asp146, Gln190, and Gly217 each bind substrate; that span reads DSGGF. An RNA binding region spans residues 248–254; sequence GVGRPED. Asp267 acts as the Nucleophile in catalysis. Residues 272 to 276 form an RNA binding; important for wobble base 34 recognition region; the sequence is TRHAR. Zn(2+) contacts are provided by Cys305, Cys307, Cys310, and His337.

This sequence belongs to the queuine tRNA-ribosyltransferase family. In terms of assembly, homodimer. Within each dimer, one monomer is responsible for RNA recognition and catalysis, while the other monomer binds to the replacement base PreQ1. Zn(2+) is required as a cofactor.

It carries out the reaction 7-aminomethyl-7-carbaguanine + guanosine(34) in tRNA = 7-aminomethyl-7-carbaguanosine(34) in tRNA + guanine. The protein operates within tRNA modification; tRNA-queuosine biosynthesis. Functionally, catalyzes the base-exchange of a guanine (G) residue with the queuine precursor 7-aminomethyl-7-deazaguanine (PreQ1) at position 34 (anticodon wobble position) in tRNAs with GU(N) anticodons (tRNA-Asp, -Asn, -His and -Tyr). Catalysis occurs through a double-displacement mechanism. The nucleophile active site attacks the C1' of nucleotide 34 to detach the guanine base from the RNA, forming a covalent enzyme-RNA intermediate. The proton acceptor active site deprotonates the incoming PreQ1, allowing a nucleophilic attack on the C1' of the ribose to form the product. After dissociation, two additional enzymatic reactions on the tRNA convert PreQ1 to queuine (Q), resulting in the hypermodified nucleoside queuosine (7-(((4,5-cis-dihydroxy-2-cyclopenten-1-yl)amino)methyl)-7-deazaguanosine). The sequence is that of Queuine tRNA-ribosyltransferase from Xylella fastidiosa (strain Temecula1 / ATCC 700964).